The sequence spans 417 residues: Serine hydroxymethyltransferase (417 aa).

(6S)-5,6,7,8-tetrahydrofolate contacts are provided by residues L116 and 120–122; that span reads GHL. K225 bears the N6-(pyridoxal phosphate)lysine mark. 350–352 contributes to the (6S)-5,6,7,8-tetrahydrofolate binding site; the sequence is SPF.

This sequence belongs to the SHMT family. Homodimer. Pyridoxal 5'-phosphate is required as a cofactor.

It localises to the cytoplasm. It catalyses the reaction (6R)-5,10-methylene-5,6,7,8-tetrahydrofolate + glycine + H2O = (6S)-5,6,7,8-tetrahydrofolate + L-serine. Its pathway is one-carbon metabolism; tetrahydrofolate interconversion. It participates in amino-acid biosynthesis; glycine biosynthesis; glycine from L-serine: step 1/1. Catalyzes the reversible interconversion of serine and glycine with tetrahydrofolate (THF) serving as the one-carbon carrier. This reaction serves as the major source of one-carbon groups required for the biosynthesis of purines, thymidylate, methionine, and other important biomolecules. Also exhibits THF-independent aldolase activity toward beta-hydroxyamino acids, producing glycine and aldehydes, via a retro-aldol mechanism. The chain is Serine hydroxymethyltransferase from Ligilactobacillus salivarius (strain UCC118) (Lactobacillus salivarius).